The chain runs to 83 residues: Alpha-neurotoxin NTX-2 (83 aa).

A signal peptide spans 1–21 (MKTLLLTLLVVTIVCLDLGYT). Intrachain disulfides connect Cys-24–Cys-45, Cys-38–Cys-62, Cys-64–Cys-75, and Cys-76–Cys-81.

Belongs to the three-finger toxin family. Short-chain subfamily. Type I alpha-neurotoxin sub-subfamily. Expressed by the venom gland.

The protein localises to the secreted. Binds to muscle nicotinic acetylcholine receptor (nAChR) and inhibit acetylcholine from binding to the receptor, thereby impairing neuromuscular transmission. In Naja sputatrix (Malayan spitting cobra), this protein is Alpha-neurotoxin NTX-2.